Here is a 491-residue protein sequence, read N- to C-terminus: Argininosuccinate lyase (491 aa).

Belongs to the lyase 1 family. Argininosuccinate lyase subfamily.

Its subcellular location is the cytoplasm. The enzyme catalyses 2-(N(omega)-L-arginino)succinate = fumarate + L-arginine. It functions in the pathway amino-acid biosynthesis; L-arginine biosynthesis; L-arginine from L-ornithine and carbamoyl phosphate: step 3/3. This is Argininosuccinate lyase from Methanococcoides burtonii (strain DSM 6242 / NBRC 107633 / OCM 468 / ACE-M).